Here is a 63-residue protein sequence, read N- to C-terminus: uncharacterized protein (63 aa).

This is an uncharacterized protein from Orgyia pseudotsugata (Douglas-fir tussock moth).